A 354-amino-acid chain; its full sequence is UDP-N-acetylglucosamine--N-acetylmuramyl-(pentapeptide) pyrophosphoryl-undecaprenol N-acetylglucosamine transferase (354 aa).

Residues 11-13 (TGG), asparagine 117, arginine 160, serine 186, and glutamine 288 each bind UDP-N-acetyl-alpha-D-glucosamine.

Belongs to the glycosyltransferase 28 family. MurG subfamily.

The protein resides in the cell inner membrane. The catalysed reaction is di-trans,octa-cis-undecaprenyl diphospho-N-acetyl-alpha-D-muramoyl-L-alanyl-D-glutamyl-meso-2,6-diaminopimeloyl-D-alanyl-D-alanine + UDP-N-acetyl-alpha-D-glucosamine = di-trans,octa-cis-undecaprenyl diphospho-[N-acetyl-alpha-D-glucosaminyl-(1-&gt;4)]-N-acetyl-alpha-D-muramoyl-L-alanyl-D-glutamyl-meso-2,6-diaminopimeloyl-D-alanyl-D-alanine + UDP + H(+). The protein operates within cell wall biogenesis; peptidoglycan biosynthesis. Functionally, cell wall formation. Catalyzes the transfer of a GlcNAc subunit on undecaprenyl-pyrophosphoryl-MurNAc-pentapeptide (lipid intermediate I) to form undecaprenyl-pyrophosphoryl-MurNAc-(pentapeptide)GlcNAc (lipid intermediate II). The chain is UDP-N-acetylglucosamine--N-acetylmuramyl-(pentapeptide) pyrophosphoryl-undecaprenol N-acetylglucosamine transferase from Rickettsia canadensis (strain McKiel).